The chain runs to 371 residues: Glutamate 5-kinase (371 aa).

K8 serves as a coordination point for ATP. S49, D136, and N149 together coordinate substrate. Residues 169–170 (TD) and 213–219 (TGGMATK) each bind ATP. In terms of domain architecture, PUA spans 278–356 (TGKLILDDGA…EDIPQVLGYA (79 aa)).

The protein belongs to the glutamate 5-kinase family.

The protein localises to the cytoplasm. The enzyme catalyses L-glutamate + ATP = L-glutamyl 5-phosphate + ADP. Its pathway is amino-acid biosynthesis; L-proline biosynthesis; L-glutamate 5-semialdehyde from L-glutamate: step 1/2. Functionally, catalyzes the transfer of a phosphate group to glutamate to form L-glutamate 5-phosphate. This Acaryochloris marina (strain MBIC 11017) protein is Glutamate 5-kinase.